Consider the following 290-residue polypeptide: Putative phosphoenolpyruvate synthase regulatory protein (290 aa).

Residue G170–T177 participates in ADP binding.

Belongs to the pyruvate, phosphate/water dikinase regulatory protein family. PSRP subfamily.

It carries out the reaction [pyruvate, water dikinase] + ADP = [pyruvate, water dikinase]-phosphate + AMP + H(+). It catalyses the reaction [pyruvate, water dikinase]-phosphate + phosphate + H(+) = [pyruvate, water dikinase] + diphosphate. Bifunctional serine/threonine kinase and phosphorylase involved in the regulation of the phosphoenolpyruvate synthase (PEPS) by catalyzing its phosphorylation/dephosphorylation. The chain is Putative phosphoenolpyruvate synthase regulatory protein (ydiA) from Enterobacter agglomerans (Erwinia herbicola).